A 466-amino-acid polypeptide reads, in one-letter code: Asparagine--tRNA ligase (466 aa).

Belongs to the class-II aminoacyl-tRNA synthetase family. Homodimer.

It localises to the cytoplasm. The catalysed reaction is tRNA(Asn) + L-asparagine + ATP = L-asparaginyl-tRNA(Asn) + AMP + diphosphate + H(+). The sequence is that of Asparagine--tRNA ligase from Vibrio parahaemolyticus serotype O3:K6 (strain RIMD 2210633).